An 890-amino-acid chain; its full sequence is Probable LRR receptor-like serine/threonine-protein kinase At1g51860 (890 aa).

A signal peptide spans 1-23 (MKSLHWFLHLLIIAFTVLRSVEA). At 24 to 513 (QNQAGFISLD…KESKKVPMVA (490 aa)) the chain is on the extracellular side. N-linked (GlcNAc...) asparagine glycans are attached at residues Asn-49, Asn-96, Asn-142, Asn-181, Asn-256, Asn-285, Asn-289, Asn-295, Asn-312, Asn-332, Asn-340, Asn-402, and Asn-419. 3 LRR repeats span residues 412–435 (RIISLNLNGSELTGSITSDISKLT), 436–458 (LLTVLDLSNNDLSGDIPTFFAEM), and 460–481 (SLKLINLSGNPNLNLTAIPDSL). Asn-465, Asn-473, and Asn-497 each carry an N-linked (GlcNAc...) asparagine glycan. The helical transmembrane segment at 514-534 (IAASVAGVFALLVILAIFFVI) threads the bilayer. The Cytoplasmic segment spans residues 535 to 890 (KRKNVKAHKS…STSDFAPGAR (356 aa)). Position 575 is a phosphothreonine (Thr-575). Residues 584–856 (NNFERVLGKG…HVVMELNDCV (273 aa)) form the Protein kinase domain. Residues 590-598 (LGKGGFGTV) and Lys-611 each bind ATP. Position 656 is a phosphotyrosine (Tyr-656). Asp-708 functions as the Proton acceptor in the catalytic mechanism. Phosphoserine is present on Ser-742. Thr-743 and Thr-748 each carry phosphothreonine. At Tyr-756 the chain carries Phosphotyrosine.

This sequence belongs to the protein kinase superfamily. Ser/Thr protein kinase family.

It is found in the membrane. The enzyme catalyses L-seryl-[protein] + ATP = O-phospho-L-seryl-[protein] + ADP + H(+). The catalysed reaction is L-threonyl-[protein] + ATP = O-phospho-L-threonyl-[protein] + ADP + H(+). The chain is Probable LRR receptor-like serine/threonine-protein kinase At1g51860 from Arabidopsis thaliana (Mouse-ear cress).